Reading from the N-terminus, the 457-residue chain is tRNA-2-methylthio-N(6)-dimethylallyladenosine synthase (457 aa).

Residues 3–120 (KKVYVKTFGC…LPQMIDARRE (118 aa)) enclose the MTTase N-terminal domain. The [4Fe-4S] cluster site is built by Cys-12, Cys-49, Cys-83, Cys-157, Cys-161, and Cys-164. Residues 143 to 377 (RVEGPSAFVS…QATIEENVAR (235 aa)) enclose the Radical SAM core domain. Residues 380-447 (QSMLGKVERI…PHSLRGELVL (68 aa)) form the TRAM domain.

Belongs to the methylthiotransferase family. MiaB subfamily. As to quaternary structure, monomer. [4Fe-4S] cluster is required as a cofactor.

The protein localises to the cytoplasm. The enzyme catalyses N(6)-dimethylallyladenosine(37) in tRNA + (sulfur carrier)-SH + AH2 + 2 S-adenosyl-L-methionine = 2-methylsulfanyl-N(6)-dimethylallyladenosine(37) in tRNA + (sulfur carrier)-H + 5'-deoxyadenosine + L-methionine + A + S-adenosyl-L-homocysteine + 2 H(+). In terms of biological role, catalyzes the methylthiolation of N6-(dimethylallyl)adenosine (i(6)A), leading to the formation of 2-methylthio-N6-(dimethylallyl)adenosine (ms(2)i(6)A) at position 37 in tRNAs that read codons beginning with uridine. The chain is tRNA-2-methylthio-N(6)-dimethylallyladenosine synthase from Burkholderia pseudomallei (strain 1710b).